The chain runs to 190 residues: 3-isopropylmalate dehydratase small subunit (190 aa).

Belongs to the LeuD family. LeuD type 1 subfamily. Heterodimer of LeuC and LeuD.

It catalyses the reaction (2R,3S)-3-isopropylmalate = (2S)-2-isopropylmalate. The protein operates within amino-acid biosynthesis; L-leucine biosynthesis; L-leucine from 3-methyl-2-oxobutanoate: step 2/4. In terms of biological role, catalyzes the isomerization between 2-isopropylmalate and 3-isopropylmalate, via the formation of 2-isopropylmaleate. This Staphylococcus aureus (strain JH1) protein is 3-isopropylmalate dehydratase small subunit.